Reading from the N-terminus, the 330-residue chain is Small ribosomal subunit protein uS2 (330 aa).

It belongs to the universal ribosomal protein uS2 family.

In Rhodopseudomonas palustris (strain BisA53), this protein is Small ribosomal subunit protein uS2.